The primary structure comprises 142 residues: Transcriptional regulator MraZ (142 aa).

SpoVT-AbrB domains follow at residues 5–48 (EFEY…PLCE) and 77–120 (AFDV…DKET).

It belongs to the MraZ family. Forms oligomers.

The protein localises to the cytoplasm. Its subcellular location is the nucleoid. This Dehalococcoides mccartyi (strain ATCC BAA-2100 / JCM 16839 / KCTC 5957 / BAV1) protein is Transcriptional regulator MraZ.